The chain runs to 1012 residues: 5'-3' exoribonuclease 2 (1012 aa).

Residues G264–G281 form a CCHC-type zinc finger. Disordered regions lie at residues V411–S439, T888–V976, and Q990–A1012. Over residues Q415–R433 the composition is skewed to basic and acidic residues. Residues I904–R914 are compositionally biased toward polar residues. 2 stretches are compositionally biased toward basic and acidic residues: residues W918–E928 and P950–N962. Residues Q990 to K1002 are compositionally biased toward basic residues.

Belongs to the 5'-3' exonuclease family. XRN2/RAT1 subfamily. In terms of tissue distribution, expressed in roots, leaves, stems and flowers.

Its subcellular location is the nucleus. In terms of biological role, possesses 5'-&gt;3' exoribonuclease activity. Acts as an endogenous post-transcriptional gene silencing (PTGS) suppressor. Degrades miRNA-derived loops, excised during miRNA maturation in the nucleus. Involved in pre-rRNA processing. Involved in the primary exonucleolytic shortening of the 5' external transcribed spacer (5'ETS), required for endonucleolytic processing at site P by the U3 snoRNP complex. Involved with XRN3 in the 5'-end processing of 5.8S and 25S rRNAs. Contributes with XRN3 to polyadenylation-dependent nuclear RNA surveillance. Involved in the degradation of aberrant polyadenylated pre-rRNA through 5'-end processing. This Arabidopsis thaliana (Mouse-ear cress) protein is 5'-3' exoribonuclease 2.